Here is a 382-residue protein sequence, read N- to C-terminus: Na(+)/H(+) antiporter NhaA 2 (382 aa).

12 helical membrane-spanning segments follow: residues 7-27 (AGGV…NSYL), 28-48 (SGFY…AFEI), 52-72 (LLLW…GLEV), 88-108 (VLPG…YASF), 118-138 (GWAI…SLFG), 147-167 (LFLL…IALF), 170-190 (HELS…LFVL), 206-226 (LVVW…GFVI), 254-274 (VAYF…LGGI), 285-305 (LGII…VCWL), 325-345 (GVCL…SLAF), and 356-376 (VKLG…LILT).

It belongs to the NhaA Na(+)/H(+) (TC 2.A.33) antiporter family.

It localises to the cell inner membrane. The enzyme catalyses Na(+)(in) + 2 H(+)(out) = Na(+)(out) + 2 H(+)(in). In terms of biological role, na(+)/H(+) antiporter that extrudes sodium in exchange for external protons. The protein is Na(+)/H(+) antiporter NhaA 2 of Saccharophagus degradans (strain 2-40 / ATCC 43961 / DSM 17024).